Consider the following 123-residue polypeptide: Large ribosomal subunit protein uL29 (123 aa).

This sequence belongs to the universal ribosomal protein uL29 family. As to quaternary structure, component of the large ribosomal subunit.

The protein resides in the cytoplasm. Its function is as follows. Component of the large ribosomal subunit. The ribosome is a large ribonucleoprotein complex responsible for the synthesis of proteins in the cell. In Ictalurus punctatus (Channel catfish), this protein is Large ribosomal subunit protein uL29 (rpl35).